We begin with the raw amino-acid sequence, 98 residues long: Dehydrogenase acuH (98 aa).

It participates in secondary metabolite biosynthesis. Dehydrogenase; part of the gene cluster that mediates the biosynthesis of aculins. The pathway begins with the synthesis of 6-methylsalicylic acid by the polyketide synthase (PKS) acuA via condensation of acetate and malonate units. The 6-methylsalicylic acid decarboxylase acuB then catalyzes the decarboxylation of 6-methylsalicylic acid to yield m-cresol (also known as 3-methylphenol). These first reactions occur in the cytosol. The intermediate m-cresol is then transported into the endoplasmic reticulum where the cytochrome P450 monooxygenase acuC converts it to m-hydroxybenzyl alcohol, which is further converted to gentisyl alcohol by the cytochrome P450 monooxygenase acuD. Gentisyl alcohol is further oxidized by the oxidoreductase acuE that probably catalyzes hydroxylation of the aromatic ring. The aromatic system might then be opened by oxidation through a Baeyer-Villiger type of oxidation, which could be catalyzed by acuF, with the carboxylic acid at C-1 subsequently reduced to an aldehyde by acuG. Subsequently, a hemiacetal is formed, before the dehydrogenase acuH would reduce the double bond between C-4 and C-6. Finally, keto-enol tautomerism results in formation of aculinic acid, which exists as two diastereomers (both R/S configurations at C-1) by non-enzymatic hemiacetal formation. The carboxypeptidase acuI could be involved in the linking of aculinic acid to an aculene A moiety produced by the aculene biosynthesis cluster and which leads to the production of aculin A. AcuI may also be involved in the attachment of proline to aculinic acid to form epi-aculins A and B. This chain is Dehydrogenase acuH, found in Aspergillus aculeatus (strain ATCC 16872 / CBS 172.66 / WB 5094).